Reading from the N-terminus, the 690-residue chain is Elongation factor G (690 aa).

Residues 8-283 (EDYRNFGIMA…AVVDYLPSPI (276 aa)) enclose the tr-type G domain. Residues 17–24 (AHIDAGKT), 81–85 (DTPGH), and 135–138 (NKMD) contribute to the GTP site.

It belongs to the TRAFAC class translation factor GTPase superfamily. Classic translation factor GTPase family. EF-G/EF-2 subfamily.

It localises to the cytoplasm. Catalyzes the GTP-dependent ribosomal translocation step during translation elongation. During this step, the ribosome changes from the pre-translocational (PRE) to the post-translocational (POST) state as the newly formed A-site-bound peptidyl-tRNA and P-site-bound deacylated tRNA move to the P and E sites, respectively. Catalyzes the coordinated movement of the two tRNA molecules, the mRNA and conformational changes in the ribosome. The polypeptide is Elongation factor G (Bradyrhizobium diazoefficiens (strain JCM 10833 / BCRC 13528 / IAM 13628 / NBRC 14792 / USDA 110)).